We begin with the raw amino-acid sequence, 336 residues long: Ketol-acid reductoisomerase (NADP(+)) (336 aa).

The 182-residue stretch at Met1–Thr182 folds into the KARI N-terminal Rossmann domain. NADP(+) contacts are provided by residues Tyr25 to Gln28, Arg48, Ser51, Ser53, and Asp83 to Gln86. His108 is a catalytic residue. Gly134 contributes to the NADP(+) binding site. Positions Thr183 to Leu328 constitute a KARI C-terminal knotted domain. 4 residues coordinate Mg(2+): Asp191, Glu195, Glu227, and Glu231. Residue Ser252 coordinates substrate.

Belongs to the ketol-acid reductoisomerase family. Mg(2+) serves as cofactor.

The catalysed reaction is (2R)-2,3-dihydroxy-3-methylbutanoate + NADP(+) = (2S)-2-acetolactate + NADPH + H(+). The enzyme catalyses (2R,3R)-2,3-dihydroxy-3-methylpentanoate + NADP(+) = (S)-2-ethyl-2-hydroxy-3-oxobutanoate + NADPH + H(+). It functions in the pathway amino-acid biosynthesis; L-isoleucine biosynthesis; L-isoleucine from 2-oxobutanoate: step 2/4. It participates in amino-acid biosynthesis; L-valine biosynthesis; L-valine from pyruvate: step 2/4. In terms of biological role, involved in the biosynthesis of branched-chain amino acids (BCAA). Catalyzes an alkyl-migration followed by a ketol-acid reduction of (S)-2-acetolactate (S2AL) to yield (R)-2,3-dihydroxy-isovalerate. In the isomerase reaction, S2AL is rearranged via a Mg-dependent methyl migration to produce 3-hydroxy-3-methyl-2-ketobutyrate (HMKB). In the reductase reaction, this 2-ketoacid undergoes a metal-dependent reduction by NADPH to yield (R)-2,3-dihydroxy-isovalerate. The sequence is that of Ketol-acid reductoisomerase (NADP(+)) from Thermotoga petrophila (strain ATCC BAA-488 / DSM 13995 / JCM 10881 / RKU-1).